The primary structure comprises 694 residues: Elongation factor G (694 aa).

In terms of domain architecture, tr-type G spans 8–287 (EDYRNFGIMA…AVVEFLPAPT (280 aa)). Residues 17 to 24 (AHIDAGKT), 86 to 90 (DTPGH), and 140 to 143 (NKMD) each bind GTP.

It belongs to the TRAFAC class translation factor GTPase superfamily. Classic translation factor GTPase family. EF-G/EF-2 subfamily.

It localises to the cytoplasm. Functionally, catalyzes the GTP-dependent ribosomal translocation step during translation elongation. During this step, the ribosome changes from the pre-translocational (PRE) to the post-translocational (POST) state as the newly formed A-site-bound peptidyl-tRNA and P-site-bound deacylated tRNA move to the P and E sites, respectively. Catalyzes the coordinated movement of the two tRNA molecules, the mRNA and conformational changes in the ribosome. This Brucella ovis (strain ATCC 25840 / 63/290 / NCTC 10512) protein is Elongation factor G.